Reading from the N-terminus, the 297-residue chain is Protein COFACTOR ASSEMBLY OF COMPLEX C SUBUNIT B CCB4, chloroplastic (297 aa).

The transit peptide at 1 to 33 (MEARIILLRIQIPWSANRQFSHPPLDFPRFIRA) directs the protein to the chloroplast. The Stromal segment spans residues 34–70 (SSSSTSQKPKTYEGPKPRKNLVADFISKNDDLVRSLP). Residues 71 to 91 (IYVGGASLLAVLFNRTVSGIA) form a helical membrane-spanning segment. Topologically, residues 92-103 (PVADASSSQSRA) are lumenal. A helical membrane pass occupies residues 104 to 124 (DLLALGLAVTNLLTGLVWLSI). The Stromal portion of the chain corresponds to 125-297 (RPKSITPVNP…DSDEISRVTV (173 aa)).

It localises to the plastid. The protein resides in the chloroplast thylakoid membrane. Functionally, required for the biogenesis and accumulation of native cytochrome b6 in the thylakoid membrane. Controls the conversion of apocytochrome b6 to holocytochrome b6. Required for covalent binding of the c-type heme to cytochrome b6. The polypeptide is Protein COFACTOR ASSEMBLY OF COMPLEX C SUBUNIT B CCB4, chloroplastic (Arabidopsis thaliana (Mouse-ear cress)).